A 357-amino-acid polypeptide reads, in one-letter code: Metacaspase-3 (357 aa).

His-168 is a catalytic residue. Ca(2+) contacts are provided by Asp-183, Asp-199, and Asp-200. The active site involves Cys-223. Asp-230 is a binding site for Ca(2+).

It belongs to the peptidase C14B family.

The protein resides in the recycling endosome. With respect to regulation, activated by Ca(2+). Its function is as follows. Cysteine protease that cleaves specifically after arginine or lysine residues. In the bloodstream form, may cleave inactive metacaspase-4 MCA4 prior to MCA4 secretion. The polypeptide is Metacaspase-3 (Trypanosoma brucei brucei).